Here is a 117-residue protein sequence, read N- to C-terminus: Small ribosomal subunit protein eS25 (117 aa).

A disordered region spans residues 1-38 (MPPKKDAKSSAKQPQKTQKKKEGSGGGKAKKKKWSKGK). Residues 28–37 (KAKKKKWSKG) are compositionally biased toward basic residues.

The protein belongs to the eukaryotic ribosomal protein eS25 family.

The sequence is that of Small ribosomal subunit protein eS25 (RpS25) from Drosophila melanogaster (Fruit fly).